Reading from the N-terminus, the 618-residue chain is Kelch-like protein 40b (618 aa).

The region spanning 33 to 100 (VDCVLKIKDK…LYTSNINVTE (68 aa)) is the BTB domain. One can recognise a BACK domain in the interval 135–237 (CLAIFRLGLM…PRDYFVKNVE (103 aa)). Basic and acidic residues predominate over residues 264–284 (PELKKTKNKKSPSEEGQKKGD). The segment at 264 to 297 (PELKKTKNKKSPSEEGQKKGDEEEVEEEEEQEER) is disordered. The span at 285–295 (EEEVEEEEEQE) shows a compositional bias: acidic residues. Kelch repeat units follow at residues 356–408 (QIFV…EAEN), 409–458 (FIFV…SHNE), 459–506 (MIYV…IHKN), 508–553 (IYVV…SVSG), and 555–608 (LYAV…VLGV).

The protein belongs to the KLHL40 family. Component of the BCR(KLHL40) E3 ubiquitin ligase complex. Expressed in skeletal muscle. Detected in the eye at much lower levels.

It is found in the cytoplasm. It localises to the myofibril. The protein resides in the sarcomere. Its subcellular location is the a band. The protein localises to the i band. In terms of biological role, substrate-specific adapter of a BCR (BTB-CUL3-RBX1) E3 ubiquitin ligase complex. Required for skeletal muscle development. The sequence is that of Kelch-like protein 40b (klhl40b) from Danio rerio (Zebrafish).